The following is a 224-amino-acid chain: Uracil-DNA glycosylase 2 (224 aa).

Aspartate 64 serves as the catalytic Proton acceptor.

The protein belongs to the uracil-DNA glycosylase (UDG) superfamily. UNG family.

Its subcellular location is the cytoplasm. The catalysed reaction is Hydrolyzes single-stranded DNA or mismatched double-stranded DNA and polynucleotides, releasing free uracil.. In terms of biological role, excises uracil residues from the DNA which can arise as a result of misincorporation of dUMP residues by DNA polymerase or due to deamination of cytosine. The protein is Uracil-DNA glycosylase 2 of Listeria innocua serovar 6a (strain ATCC BAA-680 / CLIP 11262).